Consider the following 307-residue polypeptide: Capsid assembly scaffolding protein (307 aa).

Acidic residues-rich tracts occupy residues 45–54 (IELASDEVET) and 83–101 (EPTD…EGSE). The interval 45–105 (IELASDEVET…GTEGSEEFTP (61 aa)) is disordered.

The protein belongs to the T7likevirus capsid assembly scaffolding protein family.

Its function is as follows. Scaffolding protein involved in the icosahedric procapsid assembly. Coassembles with the capsid proteins to form the procapsid, in which the scaffolding protein is found within the external shell of icosahedrally arranged capsid protein subunits. In a subsequent step the scaffolding protein molecules are released from the procapsid. Facilitates assembly by binding to gp10 hexamers but not the pentamers and locking them into a morphogenically correct conformation. In Escherichia coli (Bacteriophage T7), this protein is Capsid assembly scaffolding protein.